The following is a 232-amino-acid chain: Probable phospholipid hydroperoxide glutathione peroxidase 6, mitochondrial (232 aa).

A mitochondrion-targeting transit peptide spans 1 to 54 (MLRSSIRLLYIRRTSPLLRSLSSSSSSSSSKRFDSAKPLFNSHRIISLPISTTG). Residue C105 is part of the active site.

The protein belongs to the glutathione peroxidase family. Expressed at a low but detectable level in leaves, stems, and flowers, but at a higher level in siliques and even higher in roots. Predominantly expressed in seeds.

It is found in the mitochondrion. The enzyme catalyses a hydroperoxy polyunsaturated fatty acid + 2 glutathione = a hydroxy polyunsaturated fatty acid + glutathione disulfide + H2O. Functionally, protects cells and enzymes from oxidative damage, by catalyzing the reduction of hydrogen peroxide, lipid peroxides and organic hydroperoxide, by glutathione. This Arabidopsis thaliana (Mouse-ear cress) protein is Probable phospholipid hydroperoxide glutathione peroxidase 6, mitochondrial (GPX6).